The following is a 22-amino-acid chain: leu leader peptide (22 aa).

A disordered region spans residues 1 to 22 (MLHHMTSRANLLLLRRGGSQRS). A compositionally biased stretch (low complexity) spans 11 to 22 (LLLLRRGGSQRS).

Involved in control of the biosynthesis of leucine. In Corynebacterium glutamicum (strain ATCC 13032 / DSM 20300 / JCM 1318 / BCRC 11384 / CCUG 27702 / LMG 3730 / NBRC 12168 / NCIMB 10025 / NRRL B-2784 / 534), this protein is leu leader peptide (leuL).